The following is a 340-amino-acid chain: Deubiquitinase SseL (340 aa).

His-223 is an active-site residue. The active-site Nucleophile is Cys-285.

Belongs to the peptidase C79 family.

It localises to the secreted. It is found in the host cytoplasm. Its function is as follows. Effector proteins function to alter host cell physiology and promote bacterial survival in host tissues. This protease targets the host cell ubiquitin pathway by acting as a deubiquitinase in infected host cells. Specifically hydrolyzes mono- and polyubiquitin substrates in vitro with a preference for 'Lys-63'-linked ubiquitin chains, suggesting that it interferes with a signaling pathway rather than inhibiting proteasomal-dependent degradation of its targets. Does not possess desumoylating activity. Is required for the Salmonella-induced delayed cytotoxicity in macrophages and full virulence. Is not required for intracellular bacterial replication. This chain is Deubiquitinase SseL (sseL), found in Salmonella typhimurium (strain LT2 / SGSC1412 / ATCC 700720).